The chain runs to 409 residues: Microfibrillar-associated protein 3-like (409 aa).

Residues 1 to 28 (MDRLKSHLTVCFLPSVPFLILVSTLATA) form the signal peptide. Topologically, residues 29–149 (KSVTNSTLNG…LRVIFTSGDM (121 aa)) are extracellular. Residues N33, N37, N67, N111, and N135 are each glycosylated (N-linked (GlcNAc...) asparagine). The region spanning 47 to 141 (PVIIARTDHI…GTVNNTVTLR (95 aa)) is the Ig-like C2-type domain. C68 and C125 are joined by a disulfide. Residues 150 to 172 (GVYYMVVCLVAFTIVMVLNITRL) form a helical membrane-spanning segment. Residues 173–409 (CMMSSHLKKT…NTCIIYESHV (237 aa)) lie on the Cytoplasmic side of the membrane. A Phosphotyrosine; by EGFR modification is found at Y287. Disordered regions lie at residues 292–311 (SLKR…LHEQ) and 320–385 (SVHP…VLPP). A phosphoserine mark is found at S298, S303, S306, and S307. Positions 339–355 (EVKDVEETELSAEHSPE) are enriched in basic and acidic residues. A compositionally biased stretch (low complexity) spans 363 to 377 (VTSTELTSEEPTPVE).

As to expression, highly expressed in testis.

It localises to the cell membrane. The protein localises to the nucleus. The protein resides in the cytoplasm. May participate in the nuclear signaling of EGFR and MAPK1/ERK2. May a have a role in metastasis. The chain is Microfibrillar-associated protein 3-like (MFAP3L) from Homo sapiens (Human).